A 397-amino-acid polypeptide reads, in one-letter code: Elongation factor Tu (397 aa).

Residues 10-206 form the tr-type G domain; sequence KPHVNIGTIG…AVDTAIPEPE (197 aa). The tract at residues 19 to 26 is G1; sequence GHIDHGKT. A GTP-binding site is contributed by 19–26; that stretch reads GHIDHGKT. Residue threonine 26 coordinates Mg(2+). The interval 62–66 is G2; it reads GITIS. Residues 83–86 form a G3 region; it reads DCPG. GTP-binding positions include 83-87 and 138-141; these read DCPGH and NKAD. Residues 138–141 are G4; sequence NKAD. The tract at residues 176–178 is G5; sequence SAL.

It belongs to the TRAFAC class translation factor GTPase superfamily. Classic translation factor GTPase family. EF-Tu/EF-1A subfamily. Monomer.

Its subcellular location is the cytoplasm. It carries out the reaction GTP + H2O = GDP + phosphate + H(+). In terms of biological role, GTP hydrolase that promotes the GTP-dependent binding of aminoacyl-tRNA to the A-site of ribosomes during protein biosynthesis. This Kineococcus radiotolerans (strain ATCC BAA-149 / DSM 14245 / SRS30216) protein is Elongation factor Tu.